A 533-amino-acid polypeptide reads, in one-letter code: WD repeat-containing protein JIP5 (533 aa).

5 WD repeats span residues 26–67, 84–130, 176–215, 264–309, and 372–409; these read NYSD…EKQS, GKVS…GSCR, NSND…GSKL, NQDD…FMDQ, and GAAD…EIAL. Acidic residues-rich tracts occupy residues 408 to 428 and 437 to 452; these read ALDE…EDDL and ASDE…EDEK. The disordered stretch occupies residues 408 to 533; sequence ALDESDDSDD…EHGIRRFDDL (126 aa). Basic and acidic residues-rich tracts occupy residues 453 to 463 and 521 to 533; these read EDKPVKIDHPL and QKHE…FDDL.

It belongs to the WD repeat WDR55 family.

It is found in the nucleus. The protein resides in the nucleolus. This chain is WD repeat-containing protein JIP5 (JIP5), found in Scheffersomyces stipitis (strain ATCC 58785 / CBS 6054 / NBRC 10063 / NRRL Y-11545) (Yeast).